The primary structure comprises 214 residues: Dephospho-CoA kinase (214 aa).

The region spanning 3–202 (KIGLTGGIGS…DRWLALAGAA (200 aa)) is the DPCK domain. An ATP-binding site is contributed by 11 to 16 (GSGKSR).

This sequence belongs to the CoaE family.

It is found in the cytoplasm. It carries out the reaction 3'-dephospho-CoA + ATP = ADP + CoA + H(+). The protein operates within cofactor biosynthesis; coenzyme A biosynthesis; CoA from (R)-pantothenate: step 5/5. In terms of biological role, catalyzes the phosphorylation of the 3'-hydroxyl group of dephosphocoenzyme A to form coenzyme A. This Bordetella bronchiseptica (strain ATCC BAA-588 / NCTC 13252 / RB50) (Alcaligenes bronchisepticus) protein is Dephospho-CoA kinase.